Consider the following 278-residue polypeptide: Large ribosomal subunit protein uL2 (278 aa).

Positions 218 to 278 are disordered; it reads RPHNRGVVMN…IMRSRHQRKK (61 aa).

Belongs to the universal ribosomal protein uL2 family. In terms of assembly, part of the 50S ribosomal subunit. Forms a bridge to the 30S subunit in the 70S ribosome.

Its function is as follows. One of the primary rRNA binding proteins. Required for association of the 30S and 50S subunits to form the 70S ribosome, for tRNA binding and peptide bond formation. It has been suggested to have peptidyltransferase activity; this is somewhat controversial. Makes several contacts with the 16S rRNA in the 70S ribosome. The chain is Large ribosomal subunit protein uL2 from Rhizobium etli (strain CIAT 652).